Here is a 1047-residue protein sequence, read N- to C-terminus: Error-prone DNA polymerase (1047 aa).

The protein belongs to the DNA polymerase type-C family. DnaE2 subfamily.

Its subcellular location is the cytoplasm. The enzyme catalyses DNA(n) + a 2'-deoxyribonucleoside 5'-triphosphate = DNA(n+1) + diphosphate. Its function is as follows. DNA polymerase involved in damage-induced mutagenesis and translesion synthesis (TLS). It is not the major replicative DNA polymerase. The sequence is that of Error-prone DNA polymerase from Methylococcus capsulatus (strain ATCC 33009 / NCIMB 11132 / Bath).